A 293-amino-acid chain; its full sequence is Bisanhydrobacterioruberin hydratase (293 aa).

Helical transmembrane passes span 36 to 56 (IAVV…EGLL), 66 to 86 (FVLF…FPLV), 89 to 109 (RAGL…LVGV), 134 to 154 (FGLP…VLLL), 171 to 191 (ATVM…GFWI), 199 to 219 (GVPW…VLLF), and 254 to 274 (LFYT…GLLW).

Belongs to the BABR hydratase family.

Its subcellular location is the membrane. The catalysed reaction is bacterioruberin = bisanhydrobacterioruberin + 2 H2O. Its pathway is carotenoid biosynthesis. Involved in the biosynthesis of the acyclic C50 carotenoid bacterioruberin (BR). Catalyzes the reaction that introduces hydroxyl groups to C3'' and C3''' of bisanhydrobacterioruberin (BABR) to generate BR. This Haloarcula japonica (strain ATCC 49778 / DSM 6131 / JCM 7785 / NBRC 101032 / NCIMB 13157 / TR-1) protein is Bisanhydrobacterioruberin hydratase.